The following is a 355-amino-acid chain: Heat-inducible transcription repressor HrcA (355 aa).

This sequence belongs to the HrcA family.

Its function is as follows. Negative regulator of class I heat shock genes (grpE-dnaK-dnaJ and groELS operons). Prevents heat-shock induction of these operons. The chain is Heat-inducible transcription repressor HrcA from Nitratidesulfovibrio vulgaris (strain ATCC 29579 / DSM 644 / CCUG 34227 / NCIMB 8303 / VKM B-1760 / Hildenborough) (Desulfovibrio vulgaris).